Consider the following 264-residue polypeptide: Tryptophan synthase alpha chain (264 aa).

Residues glutamate 49 and aspartate 60 each act as proton acceptor in the active site.

The protein belongs to the TrpA family. As to quaternary structure, tetramer of two alpha and two beta chains.

It catalyses the reaction (1S,2R)-1-C-(indol-3-yl)glycerol 3-phosphate + L-serine = D-glyceraldehyde 3-phosphate + L-tryptophan + H2O. The protein operates within amino-acid biosynthesis; L-tryptophan biosynthesis; L-tryptophan from chorismate: step 5/5. The alpha subunit is responsible for the aldol cleavage of indoleglycerol phosphate to indole and glyceraldehyde 3-phosphate. This is Tryptophan synthase alpha chain from Geotalea daltonii (strain DSM 22248 / JCM 15807 / FRC-32) (Geobacter daltonii).